Consider the following 193-residue polypeptide: uncharacterized protein (193 aa).

A helical transmembrane segment spans residues 153-170 (WRYWAVIALIAAVLIYLY).

Its subcellular location is the membrane. This is an uncharacterized protein from Invertebrate iridescent virus 6 (IIV-6).